Reading from the N-terminus, the 264-residue chain is ATP synthase subunit a (264 aa).

7 helical membrane-spanning segments follow: residues 30-50, 90-110, 111-131, 134-154, 177-197, 208-228, and 235-255; these read WNIDSLLFSVGLGMLFLWLFY, IAPLALTIFVWIFMMNFMDMI, PVDWLPSLALLAGVPYLKVVP, DVNITFSLALGVFVLIIYYSI, IPVNLLLETVTLVAKPISLAL, LIFILIALMYGSNVALSALGV, and LIFHILVITLQAFIFMMLTIV.

Belongs to the ATPase A chain family. F-type ATPases have 2 components, CF(1) - the catalytic core - and CF(0) - the membrane proton channel. CF(1) has five subunits: alpha(3), beta(3), gamma(1), delta(1), epsilon(1). CF(0) has three main subunits: a(1), b(2) and c(9-12). The alpha and beta chains form an alternating ring which encloses part of the gamma chain. CF(1) is attached to CF(0) by a central stalk formed by the gamma and epsilon chains, while a peripheral stalk is formed by the delta and b chains.

The protein localises to the cell inner membrane. In terms of biological role, key component of the proton channel; it plays a direct role in the translocation of protons across the membrane. This chain is ATP synthase subunit a, found in Shewanella frigidimarina (strain NCIMB 400).